A 405-amino-acid chain; its full sequence is Octaketide synthase 3 (405 aa).

Positions 1–10 are enriched in polar residues; that stretch reads MGSIAESSPL. Residues 1-22 are disordered; that stretch reads MGSIAESSPLMSRENVEGIRKA. Cys-176 is a catalytic residue. CoA contacts are provided by residues Ser-283 and 320–323; that span reads GGRA.

The protein belongs to the thiolase-like superfamily. Chalcone/stilbene synthases family. Homodimer.

It participates in secondary metabolite biosynthesis; flavonoid biosynthesis. Catalyzes the iterative condensations of 8 molecules of malonyl-CoA to produce aromatic octaketides, SEK4 and SEK4b, the products of the minimal polyketide synthase for the benzoisochromanequinone actinorhodin. May be involved in the biosynthesis of the octaketide barbaloin. The polypeptide is Octaketide synthase 3 (PKS5) (Aloe arborescens (Kidachi aloe)).